The primary structure comprises 886 residues: Translation initiation factor IF-2 (886 aa).

Disordered regions lie at residues methionine 1–proline 25, arginine 50–glutamate 229, and lysine 253–glutamate 272. The span at arginine 50–arginine 60 shows a compositional bias: basic and acidic residues. Residues alanine 63–proline 73 are compositionally biased toward low complexity. A compositionally biased stretch (pro residues) spans glutamine 74–glutamine 83. The segment covering proline 84–serine 106 has biased composition (low complexity). Over residues leucine 107–arginine 181 the composition is skewed to basic and acidic residues. Positions glycine 185–arginine 225 are enriched in low complexity. One can recognise a tr-type G domain in the interval serine 383–lysine 553. Residues glycine 392–threonine 399 form a G1 region. Glycine 392–threonine 399 contacts GTP. Positions glycine 417 to histidine 421 are G2. The tract at residues aspartate 439 to glycine 442 is G3. GTP is bound by residues aspartate 439–histidine 443 and asparagine 493–aspartate 496. The interval asparagine 493 to aspartate 496 is G4. Positions serine 529 to threonine 531 are G5.

The protein belongs to the TRAFAC class translation factor GTPase superfamily. Classic translation factor GTPase family. IF-2 subfamily.

It localises to the cytoplasm. Functionally, one of the essential components for the initiation of protein synthesis. Protects formylmethionyl-tRNA from spontaneous hydrolysis and promotes its binding to the 30S ribosomal subunits. Also involved in the hydrolysis of GTP during the formation of the 70S ribosomal complex. In Methylocella silvestris (strain DSM 15510 / CIP 108128 / LMG 27833 / NCIMB 13906 / BL2), this protein is Translation initiation factor IF-2.